Consider the following 731-residue polypeptide: Beta-galactosidase (731 aa).

An N-terminal signal peptide occupies residues 1–23 (MGVGIQTMWSILLLFSCIFSAAS). The Proton donor role is filled by glutamate 182. Catalysis depends on glutamate 251, which acts as the Nucleophile. Asparagine 459 carries N-linked (GlcNAc...) asparagine glycosylation.

The protein belongs to the glycosyl hydrolase 35 family.

Its subcellular location is the secreted. It localises to the extracellular space. The protein localises to the apoplast. The enzyme catalyses Hydrolysis of terminal non-reducing beta-D-galactose residues in beta-D-galactosides.. Its function is as follows. Involved in cell wall degradation. Degrades polysaccharides containing beta-(1--&gt;4)-linked galactans, acting as an exo-(1--&gt;4)-beta-D-galactanase. The sequence is that of Beta-galactosidase from Malus domestica (Apple).